Reading from the N-terminus, the 257-residue chain is Phosphonates import ATP-binding protein PhnC 1 (257 aa).

In terms of domain architecture, ABC transporter spans 2 to 246 (IELKNVSKVY…VFKDIYGRPL (245 aa)). Position 35–42 (35–42 (GLSGAGKS)) interacts with ATP.

This sequence belongs to the ABC transporter superfamily. Phosphonates importer (TC 3.A.1.9.1) family. In terms of assembly, the complex is composed of two ATP-binding proteins (PhnC), two transmembrane proteins (PhnE) and a solute-binding protein (PhnD).

Its subcellular location is the cell membrane. It carries out the reaction phosphonate(out) + ATP + H2O = phosphonate(in) + ADP + phosphate + H(+). Part of the ABC transporter complex PhnCDE involved in phosphonates import. Responsible for energy coupling to the transport system. This is Phosphonates import ATP-binding protein PhnC 1 from Halalkalibacterium halodurans (strain ATCC BAA-125 / DSM 18197 / FERM 7344 / JCM 9153 / C-125) (Bacillus halodurans).